A 322-amino-acid chain; its full sequence is Peroxisomal adenine nucleotide carrier 1 (322 aa).

Solcar repeat units follow at residues 5–94 (LESV…FKRV), 104–184 (IGTK…LKQH), and 202–298 (LSAF…ITAT). The next 6 helical transmembrane spans lie at 8 to 28 (VSEA…LYPL), 104 to 124 (IGTK…SVLI), 158 to 178 (FDGL…YTVF), 201 to 221 (VLSA…ATVL), 254 to 274 (IPGV…FKGL), and 286 to 306 (ALLL…ILAI).

This sequence belongs to the mitochondrial carrier (TC 2.A.29) family. As to expression, expressed in stamens, pollen grains, seeds, leaves, cotyledons, roots, stems, flowers, hypocotyls and siliques.

It is found in the peroxisome membrane. Its function is as follows. Peroxisomal adenine nucleotide transporter catalyzing the counterexchange of ATP with AMP. ATP is needed by reactions that generate acyl-CoA for peroxisomal fatty acid beta-oxidation during postgerminative growth. Required for the beta-oxidation reactions involved in auxin biosynthesis and for the conversion of seed-reserved triacylglycerols into sucrose that is necessary for growth before the onset of photosynthesis. In Arabidopsis thaliana (Mouse-ear cress), this protein is Peroxisomal adenine nucleotide carrier 1 (PNC1).